We begin with the raw amino-acid sequence, 462 residues long: Signal recognition particle protein (462 aa).

GTP-binding positions include 107 to 114, 190 to 194, and 248 to 251; these read GLQGAGKT, DTAGR, and TKVD.

It belongs to the GTP-binding SRP family. SRP54 subfamily. Part of the signal recognition particle protein translocation system, which is composed of SRP and FtsY. SRP is a ribonucleoprotein composed of Ffh and a 4.5S RNA molecule.

The protein resides in the cytoplasm. It catalyses the reaction GTP + H2O = GDP + phosphate + H(+). Involved in targeting and insertion of nascent membrane proteins into the cytoplasmic membrane. Binds to the hydrophobic signal sequence of the ribosome-nascent chain (RNC) as it emerges from the ribosomes. The SRP-RNC complex is then targeted to the cytoplasmic membrane where it interacts with the SRP receptor FtsY. Interaction with FtsY leads to the transfer of the RNC complex to the Sec translocase for insertion into the membrane, the hydrolysis of GTP by both Ffh and FtsY, and the dissociation of the SRP-FtsY complex into the individual components. This chain is Signal recognition particle protein, found in Haemophilus influenzae (strain ATCC 51907 / DSM 11121 / KW20 / Rd).